The following is a 1357-amino-acid chain: DNA-directed RNA polymerase subunit beta (1357 aa).

The protein belongs to the RNA polymerase beta chain family. In terms of assembly, the RNAP catalytic core consists of 2 alpha, 1 beta, 1 beta' and 1 omega subunit. When a sigma factor is associated with the core the holoenzyme is formed, which can initiate transcription.

The catalysed reaction is RNA(n) + a ribonucleoside 5'-triphosphate = RNA(n+1) + diphosphate. In terms of biological role, DNA-dependent RNA polymerase catalyzes the transcription of DNA into RNA using the four ribonucleoside triphosphates as substrates. This Pseudomonas putida (strain GB-1) protein is DNA-directed RNA polymerase subunit beta.